Here is an 881-residue protein sequence, read N- to C-terminus: Formin-like protein 10 (881 aa).

The first 24 residues, 1–24, serve as a signal peptide directing secretion; that stretch reads MAMKRVVFLLLLVAASALVKSSRG. The tract at residues 194-223 is disordered; sequence LTPSNSLNMEPPSPYYPSKSAHKHQGVAPP. Residues 236–256 form a helical membrane-spanning segment; the sequence is VVLIAVLPTAALSFLAAFLCF. Polar residues predominate over residues 333–346; sequence TLVTGGTQENNATS. Disordered stretches follow at residues 333–427, 683–703, and 837–881; these read TLVT…EVNA, ENGR…ESLQ, and ASQK…DSND. Residues 351–390 are compositionally biased toward pro residues; sequence LMPPPPPPPPPPPPPPPPPPPRPPPPPPPIKKGAPPPAPP. Residues 400–424 are compositionally biased toward low complexity; sequence LSPTESSRSEESSASELASESSETE. In terms of domain architecture, FH2 spans 422-854; the sequence is ETEVNAPRAK…KSQANGNSNN (433 aa). The segment covering 692–701 has biased composition (polar residues); the sequence is STSDDNSNES. Residues 846–865 show a composition bias toward low complexity; sequence SQANGNSNNPSSQSNPQEQQ. Basic and acidic residues predominate over residues 870–881; that stretch reads LDHHFDSSDSND.

This sequence belongs to the formin-like family. Class-I subfamily.

The protein localises to the membrane. The sequence is that of Formin-like protein 10 (FH10) from Oryza sativa subsp. japonica (Rice).